Consider the following 187-residue polypeptide: UPF0301 protein KPK_0728 (187 aa).

Belongs to the UPF0301 (AlgH) family.

This Klebsiella pneumoniae (strain 342) protein is UPF0301 protein KPK_0728.